Consider the following 434-residue polypeptide: Methylenetetrahydrofolate--tRNA-(uracil-5-)-methyltransferase TrmFO (434 aa).

An FAD-binding site is contributed by 8 to 13 (GAGLAG).

It belongs to the MnmG family. TrmFO subfamily. The cofactor is FAD.

The protein resides in the cytoplasm. It carries out the reaction uridine(54) in tRNA + (6R)-5,10-methylene-5,6,7,8-tetrahydrofolate + NADH + H(+) = 5-methyluridine(54) in tRNA + (6S)-5,6,7,8-tetrahydrofolate + NAD(+). The enzyme catalyses uridine(54) in tRNA + (6R)-5,10-methylene-5,6,7,8-tetrahydrofolate + NADPH + H(+) = 5-methyluridine(54) in tRNA + (6S)-5,6,7,8-tetrahydrofolate + NADP(+). Its function is as follows. Catalyzes the folate-dependent formation of 5-methyl-uridine at position 54 (M-5-U54) in all tRNAs. In Exiguobacterium sibiricum (strain DSM 17290 / CCUG 55495 / CIP 109462 / JCM 13490 / 255-15), this protein is Methylenetetrahydrofolate--tRNA-(uracil-5-)-methyltransferase TrmFO.